The primary structure comprises 207 residues: Pyridoxine/pyridoxamine 5'-phosphate oxidase (207 aa).

FMN-binding positions include R53–K58, Y68–T69, K75, and Q97. K58 contributes to the substrate binding site. The substrate site is built by Y115, R119, and S123. FMN is bound by residues Q132–S133 and W177. R183 to H185 provides a ligand contact to substrate. R187 is a binding site for FMN.

It belongs to the pyridoxamine 5'-phosphate oxidase family. Homodimer. FMN is required as a cofactor.

The enzyme catalyses pyridoxamine 5'-phosphate + O2 + H2O = pyridoxal 5'-phosphate + H2O2 + NH4(+). It carries out the reaction pyridoxine 5'-phosphate + O2 = pyridoxal 5'-phosphate + H2O2. Its pathway is cofactor metabolism; pyridoxal 5'-phosphate salvage; pyridoxal 5'-phosphate from pyridoxamine 5'-phosphate: step 1/1. It functions in the pathway cofactor metabolism; pyridoxal 5'-phosphate salvage; pyridoxal 5'-phosphate from pyridoxine 5'-phosphate: step 1/1. Functionally, catalyzes the oxidation of either pyridoxine 5'-phosphate (PNP) or pyridoxamine 5'-phosphate (PMP) into pyridoxal 5'-phosphate (PLP). The polypeptide is Pyridoxine/pyridoxamine 5'-phosphate oxidase (Bartonella henselae (strain ATCC 49882 / DSM 28221 / CCUG 30454 / Houston 1) (Rochalimaea henselae)).